Reading from the N-terminus, the 34-residue chain is Photosystem II reaction center protein M (34 aa).

A helical membrane pass occupies residues 5 to 25; that stretch reads ILGLMAVALFILIPTSFLLIL.

Belongs to the PsbM family. PSII is composed of 1 copy each of membrane proteins PsbA, PsbB, PsbC, PsbD, PsbE, PsbF, PsbH, PsbI, PsbJ, PsbK, PsbL, PsbM, PsbT, PsbX, PsbY, PsbZ, Psb30/Ycf12, at least 3 peripheral proteins of the oxygen-evolving complex and a large number of cofactors. It forms dimeric complexes.

It localises to the plastid. Its subcellular location is the chloroplast thylakoid membrane. Its function is as follows. One of the components of the core complex of photosystem II (PSII). PSII is a light-driven water:plastoquinone oxidoreductase that uses light energy to abstract electrons from H(2)O, generating O(2) and a proton gradient subsequently used for ATP formation. It consists of a core antenna complex that captures photons, and an electron transfer chain that converts photonic excitation into a charge separation. This subunit is found at the monomer-monomer interface. In Tupiella akineta (Green alga), this protein is Photosystem II reaction center protein M.